Here is a 632-residue protein sequence, read N- to C-terminus: 1-deoxy-D-xylulose-5-phosphate synthase (632 aa).

Residues His-78 and 119 to 121 (AHS) contribute to the thiamine diphosphate site. Position 150 (Asp-150) interacts with Mg(2+). Thiamine diphosphate is bound by residues 151–152 (GA), Asn-179, Tyr-286, and Glu-368. Asn-179 is a binding site for Mg(2+).

It belongs to the transketolase family. DXPS subfamily. As to quaternary structure, homodimer. Requires Mg(2+) as cofactor. Thiamine diphosphate serves as cofactor.

The enzyme catalyses D-glyceraldehyde 3-phosphate + pyruvate + H(+) = 1-deoxy-D-xylulose 5-phosphate + CO2. It participates in metabolic intermediate biosynthesis; 1-deoxy-D-xylulose 5-phosphate biosynthesis; 1-deoxy-D-xylulose 5-phosphate from D-glyceraldehyde 3-phosphate and pyruvate: step 1/1. In terms of biological role, catalyzes the acyloin condensation reaction between C atoms 2 and 3 of pyruvate and glyceraldehyde 3-phosphate to yield 1-deoxy-D-xylulose-5-phosphate (DXP). This is 1-deoxy-D-xylulose-5-phosphate synthase from Albidiferax ferrireducens (strain ATCC BAA-621 / DSM 15236 / T118) (Rhodoferax ferrireducens).